The primary structure comprises 358 residues: NADH-quinone oxidoreductase subunit H (358 aa).

8 helical membrane passes run 30–50 (IAVGVCIVALYAILAIVLIYM), 96–116 (FLYNLAPFMVIIASFLTFACI), 129–149 (VGVFFLLAASSIGVVGILLAG), 168–188 (IISYELSVGMSIMTMVVLMGT), 201–221 (GWFIFKGHIPAVIAFIIYLIA), 265–285 (FIVASVAATIFLGGWMPLHII), 297–317 (IPGFIWFFAKAFFVVFLLMWI), and 336–356 (YLVPISMVNLLLMACCVAFGF).

The protein belongs to the complex I subunit 1 family. As to quaternary structure, NDH-1 is composed of 14 different subunits. Subunits NuoA, H, J, K, L, M, N constitute the membrane sector of the complex.

Its subcellular location is the cell inner membrane. It carries out the reaction a quinone + NADH + 5 H(+)(in) = a quinol + NAD(+) + 4 H(+)(out). NDH-1 shuttles electrons from NADH, via FMN and iron-sulfur (Fe-S) centers, to quinones in the respiratory chain. The immediate electron acceptor for the enzyme in this species is believed to be ubiquinone. Couples the redox reaction to proton translocation (for every two electrons transferred, four hydrogen ions are translocated across the cytoplasmic membrane), and thus conserves the redox energy in a proton gradient. This subunit may bind ubiquinone. The polypeptide is NADH-quinone oxidoreductase subunit H (Bacteroides thetaiotaomicron (strain ATCC 29148 / DSM 2079 / JCM 5827 / CCUG 10774 / NCTC 10582 / VPI-5482 / E50)).